The primary structure comprises 261 residues: Transmembrane and immunoglobulin domain-containing protein 1 (261 aa).

Positions methionine 1–threonine 27 are cleaved as a signal peptide. One can recognise an Ig-like C2-type 1 domain in the interval serine 28 to serine 114. Residues serine 28–proline 219 are Extracellular-facing. A disulfide bridge links cysteine 54 with cysteine 103. N-linked (GlcNAc...) asparagine glycans are attached at residues asparagine 83, asparagine 108, asparagine 118, and asparagine 189. Positions proline 122 to histidine 208 constitute an Ig-like C2-type 2 domain. The cysteines at positions 143 and 194 are disulfide-linked. Residues isoleucine 220–alanine 240 form a helical membrane-spanning segment. The Cytoplasmic portion of the chain corresponds to arginine 241 to leucine 261.

Homodimer. Post-translationally, N-glycosylated.

Its subcellular location is the cell membrane. The protein localises to the cytoplasm. Its function is as follows. May control cell-cell adhesion, cell migration and proliferation, cell morphology, and protects renal epithelial cells from oxidative cell injury to promote cell survival. This Bos taurus (Bovine) protein is Transmembrane and immunoglobulin domain-containing protein 1.